The chain runs to 90 residues: Co-chaperonin GroES (90 aa).

This sequence belongs to the GroES chaperonin family. As to quaternary structure, heptamer of 7 subunits arranged in a ring. Interacts with the chaperonin GroEL.

The protein resides in the cytoplasm. Functionally, together with the chaperonin GroEL, plays an essential role in assisting protein folding. The GroEL-GroES system forms a nano-cage that allows encapsulation of the non-native substrate proteins and provides a physical environment optimized to promote and accelerate protein folding. GroES binds to the apical surface of the GroEL ring, thereby capping the opening of the GroEL channel. In Phocaeicola vulgatus (strain ATCC 8482 / DSM 1447 / JCM 5826 / CCUG 4940 / NBRC 14291 / NCTC 11154) (Bacteroides vulgatus), this protein is Co-chaperonin GroES.